A 443-amino-acid chain; its full sequence is Histidinol dehydrogenase (443 aa).

NAD(+) is bound by residues tyrosine 127, glutamine 185, and asparagine 208. Positions 234, 256, and 259 each coordinate substrate. Positions 256 and 259 each coordinate Zn(2+). Active-site proton acceptor residues include glutamate 323 and histidine 324. Positions 324, 357, 411, and 416 each coordinate substrate. Aspartate 357 serves as a coordination point for Zn(2+). A Zn(2+)-binding site is contributed by histidine 416.

This sequence belongs to the histidinol dehydrogenase family. Zn(2+) serves as cofactor.

It catalyses the reaction L-histidinol + 2 NAD(+) + H2O = L-histidine + 2 NADH + 3 H(+). Its pathway is amino-acid biosynthesis; L-histidine biosynthesis; L-histidine from 5-phospho-alpha-D-ribose 1-diphosphate: step 9/9. In terms of biological role, catalyzes the sequential NAD-dependent oxidations of L-histidinol to L-histidinaldehyde and then to L-histidine. This is Histidinol dehydrogenase from Photobacterium profundum (strain SS9).